The following is a 107-amino-acid chain: Putidaredoxin (107 aa).

Positions S2–Q106 constitute a 2Fe-2S ferredoxin-type domain. [2Fe-2S] cluster is bound by residues C40, C46, C49, and C87.

It belongs to the adrenodoxin/putidaredoxin family. In terms of assembly, monomer. [2Fe-2S] cluster is required as a cofactor.

Its function is as follows. The oxidation of camphor by cytochrome P450-CAM requires the participation of a flavoprotein, putidaredoxin reductase, and an iron-sulfur protein, putidaredoxin, to mediate the transfer of electrons from NADH to P450 for oxygen activation. In Pseudomonas putida (Arthrobacter siderocapsulatus), this protein is Putidaredoxin (camB).